A 361-amino-acid polypeptide reads, in one-letter code: Cobalt-precorrin-5B C(1)-methyltransferase (361 aa).

This sequence belongs to the CbiD family.

The enzyme catalyses Co-precorrin-5B + S-adenosyl-L-methionine = Co-precorrin-6A + S-adenosyl-L-homocysteine. It functions in the pathway cofactor biosynthesis; adenosylcobalamin biosynthesis; cob(II)yrinate a,c-diamide from sirohydrochlorin (anaerobic route): step 6/10. Its function is as follows. Catalyzes the methylation of C-1 in cobalt-precorrin-5B to form cobalt-precorrin-6A. This chain is Cobalt-precorrin-5B C(1)-methyltransferase, found in Methanobrevibacter smithii (strain ATCC 35061 / DSM 861 / OCM 144 / PS).